A 325-amino-acid polypeptide reads, in one-letter code: tRNA N6-adenosine threonylcarbamoyltransferase (325 aa).

Positions 111 and 115 each coordinate Fe cation. Substrate-binding positions include Leu-134–Gly-138, Asp-167, Gly-180, and Asn-277. Asp-305 is a Fe cation binding site.

This sequence belongs to the KAE1 / TsaD family. Fe(2+) is required as a cofactor.

Its subcellular location is the cytoplasm. The protein localises to the secreted. The enzyme catalyses L-threonylcarbamoyladenylate + adenosine(37) in tRNA = N(6)-L-threonylcarbamoyladenosine(37) in tRNA + AMP + H(+). Functionally, required for the formation of a threonylcarbamoyl group on adenosine at position 37 (t(6)A37) in tRNAs that read codons beginning with adenine. Is involved in the transfer of the threonylcarbamoyl moiety of threonylcarbamoyl-AMP (TC-AMP) to the N6 group of A37, together with TsaE and TsaB. TsaD likely plays a direct catalytic role in this reaction. The protein is tRNA N6-adenosine threonylcarbamoyltransferase of Mannheimia haemolytica (Pasteurella haemolytica).